The primary structure comprises 174 residues: Gamma-crystallin A (174 aa).

2 Beta/gamma crystallin 'Greek key' domains span residues 2 to 40 (GKIT…RVDS) and 41 to 83 (GCWM…RIIP). The interval 84–87 (HTSS) is connecting peptide. Beta/gamma crystallin 'Greek key' domains are found at residues 88–128 (HKLR…HVLE) and 129–171 (GCWV…RRVT).

It belongs to the beta/gamma-crystallin family. In terms of assembly, monomer.

In terms of biological role, crystallins are the dominant structural components of the vertebrate eye lens. The sequence is that of Gamma-crystallin A (CRYGA) from Homo sapiens (Human).